A 355-amino-acid chain; its full sequence is Peptide chain release factor 1 (355 aa).

The residue at position 233 (Gln233) is an N5-methylglutamine. The span at 283–293 (EKNKDRADARK) shows a compositional bias: basic and acidic residues. The disordered stretch occupies residues 283-304 (EKNKDRADARKSQVGTGDRSER).

It belongs to the prokaryotic/mitochondrial release factor family. In terms of processing, methylated by PrmC. Methylation increases the termination efficiency of RF1.

It is found in the cytoplasm. In terms of biological role, peptide chain release factor 1 directs the termination of translation in response to the peptide chain termination codons UAG and UAA. The sequence is that of Peptide chain release factor 1 from Finegoldia magna (strain ATCC 29328 / DSM 20472 / WAL 2508) (Peptostreptococcus magnus).